Consider the following 637-residue polypeptide: uncharacterized protein (637 aa).

Positions C7–C34 form a DNA-binding region, zn(2)-C6 fungal-type. Residues S304–S327 form a C2H2-type; degenerate zinc finger.

Its subcellular location is the nucleus. This is an uncharacterized protein from Schizosaccharomyces pombe (strain 972 / ATCC 24843) (Fission yeast).